A 123-amino-acid polypeptide reads, in one-letter code: MKANSTKLSQLMKSVEIPFIKTEVPEIKVGDTIQLGLMVKEGSKTREQLCEGVVLARRRKKSLNTSLTLRCSFQGIGVERVFFLNSPRITFVKVIRRAKIRRAKLYYLRDLLGKAGRLKQIFN.

It belongs to the bacterial ribosomal protein bL19 family.

The protein localises to the plastid. It is found in the chloroplast. This chain is Large ribosomal subunit protein bL19c, found in Pyropia yezoensis (Susabi-nori).